Consider the following 854-residue polypeptide: DNA mismatch repair protein MutS (854 aa).

608–615 (GPNMAGKS) contributes to the ATP binding site.

The protein belongs to the DNA mismatch repair MutS family.

This protein is involved in the repair of mismatches in DNA. It is possible that it carries out the mismatch recognition step. This protein has a weak ATPase activity. This is DNA mismatch repair protein MutS from Leuconostoc mesenteroides subsp. mesenteroides (strain ATCC 8293 / DSM 20343 / BCRC 11652 / CCM 1803 / JCM 6124 / NCDO 523 / NBRC 100496 / NCIMB 8023 / NCTC 12954 / NRRL B-1118 / 37Y).